Reading from the N-terminus, the 191-residue chain is Ribonuclease M5 (191 aa).

Residues 8 to 91 (HEFIVVEGRD…AFINRQDALP (84 aa)) form the Toprim domain. Mg(2+) contacts are provided by Glu14, Asp60, and Asp62.

Belongs to the ribonuclease M5 family. Mg(2+) serves as cofactor.

It is found in the cytoplasm. It carries out the reaction Endonucleolytic cleavage of RNA, removing 21 and 42 nucleotides, respectively, from the 5'- and 3'-termini of a 5S-rRNA precursor.. Its function is as follows. Required for correct processing of both the 5' and 3' ends of 5S rRNA precursor. Cleaves both sides of a double-stranded region yielding mature 5S rRNA in one step. The chain is Ribonuclease M5 from Listeria monocytogenes serovar 1/2a (strain ATCC BAA-679 / EGD-e).